A 1418-amino-acid polypeptide reads, in one-letter code: Chromatin remodeling factor mit1 (1418 aa).

Positions 135-148 are enriched in low complexity; it reads DETASDSATSSSSD. The tract at residues 135-156 is disordered; it reads DETASDSATSSSSDTNKKVNRK. The segment at 212–271 adopts a PHD-type zinc-finger fold; the sequence is VCVCVKCHGREHRSSGKNFVYCDHCSNVYHYDCSPLPSLNKETRNYSQQNGFICPLCSKN. The RING-type; atypical zinc finger occupies 215-269; that stretch reads CVKCHGREHRSSGKNFVYCDHCSNVYHYDCSPLPSLNKETRNYSQQNGFICPLCS. Residues 568 to 738 enclose the Helicase ATP-binding domain; sequence YLRWYTHHPC…FNLLQFLNPM (171 aa). 581 to 588 contacts ATP; it reads DEMGLGKT. In terms of domain architecture, Helicase C-terminal spans 875–1034; the sequence is ILRLLVPKLI…QNHNSEKDLE (160 aa).

The protein belongs to the SNF2/RAD54 helicase family. In terms of assembly, interacts with clr3.

The protein localises to the nucleus. It is found in the chromosome. Its subcellular location is the centromere. It localises to the telomere. Its function is as follows. Required for proper positioning of nucleosomes at heterochromatic loci and for transcriptional gene silencing (TGS) function of the Snf2/Hdac-containing repressor complex (SHREC). This chain is Chromatin remodeling factor mit1 (mit1), found in Schizosaccharomyces pombe (strain 972 / ATCC 24843) (Fission yeast).